Here is a 443-residue protein sequence, read N- to C-terminus: Chromosome partition protein MukF (443 aa).

The leucine-zipper stretch occupies residues 209-237 (LDETSGNLRELQDTLNAAGDKLQAQLLRI).

It belongs to the MukF family. Interacts, and probably forms a ternary complex, with MukE and MukB via its C-terminal region. The complex formation is stimulated by calcium or magnesium. It is required for an interaction between MukE and MukB.

It is found in the cytoplasm. It localises to the nucleoid. Involved in chromosome condensation, segregation and cell cycle progression. May participate in facilitating chromosome segregation by condensation DNA from both sides of a centrally located replisome during cell division. Not required for mini-F plasmid partitioning. Probably acts via its interaction with MukB and MukE. Overexpression results in anucleate cells. It has a calcium binding activity. The protein is Chromosome partition protein MukF of Actinobacillus pleuropneumoniae serotype 7 (strain AP76).